Reading from the N-terminus, the 686-residue chain is tRNA (guanine(37)-N(1))-methyltransferase (686 aa).

The segment at 206–244 (GGPSSVSLTEDTDGSEQPQGLPRAAAAPPPPSNKRRASY) is disordered. S-adenosyl-L-methionine-binding positions include His-428, 466-467 (DL), 495-496 (DG), and Asn-530.

Belongs to the class I-like SAM-binding methyltransferase superfamily. TRM5/TYW2 family. In terms of assembly, monomer.

It is found in the mitochondrion matrix. The protein resides in the nucleus. It localises to the cytoplasm. It carries out the reaction guanosine(37) in tRNA + S-adenosyl-L-methionine = N(1)-methylguanosine(37) in tRNA + S-adenosyl-L-homocysteine + H(+). Functionally, specifically methylates the N1 position of guanosine-37 in various cytoplasmic and mitochondrial tRNAs. Methylation is not dependent on the nature of the nucleoside 5' of the target nucleoside. This is the first step in the biosynthesis of wybutosine (yW), a modified base adjacent to the anticodon of tRNAs and required for accurate decoding. In Leishmania major, this protein is tRNA (guanine(37)-N(1))-methyltransferase.